We begin with the raw amino-acid sequence, 140 residues long: MGMVSEFQQFAIRGNVIDLAVGVVIGAAFGKIVTALVEKIIMPPIGWAIGNVDFSRLAWVLKPAGVDATGKDIPAVAIGYGDFINTVVQFVIIAFAIFLLVKLINRVTNRKPDAPKGPSEEVLLLREIRDSLKNDTLKSG.

2 helical membrane passes run 16 to 36 (VIDL…VTAL) and 84 to 104 (INTV…VKLI).

The protein belongs to the MscL family. In terms of assembly, homopentamer.

Its subcellular location is the cell inner membrane. Functionally, channel that opens in response to stretch forces in the membrane lipid bilayer. May participate in the regulation of osmotic pressure changes within the cell. The protein is Large-conductance mechanosensitive channel of Xanthomonas oryzae pv. oryzae (strain MAFF 311018).